Reading from the N-terminus, the 154-residue chain is Interleukin-7 (154 aa).

Positions 1–25 (MFHVSFRYIFGIPPLILVLLPVTSS) are cleaved as a signal peptide. 3 disulfides stabilise this stretch: C27-C145, C58-C133, and C71-C116. N94 and N115 each carry an N-linked (GlcNAc...) asparagine glycan.

It belongs to the IL-7/IL-9 family. In terms of assembly, interacts with IL7R and CSF2RG. Post-translationally, three disulfide bonds are present.

It is found in the secreted. Its function is as follows. Hematopoietic cytokine that plays an essential role in the development, expansion, and survival of naive and memory T-cells and B-cells thereby regulating the number of mature lymphocytes and maintaining lymphoid homeostasis. Mechanistically, exerts its biological effects through a receptor composed of IL7RA subunit and the cytokine receptor common subunit gamma/CSF2RG. Binding to the receptor leads to activation of various kinases including JAK1 or JAK3 depending on the cell type and subsequently propagation of signals through activation of several downstream signaling pathways including the PI3K/Akt/mTOR or the JAK-STAT5. The protein is Interleukin-7 (Il7) of Rattus norvegicus (Rat).